Here is a 204-residue protein sequence, read N- to C-terminus: MKNESTFIDVPADSSSAMKGKAPLIGVAKDHTASGSGGYNRGLSIFDFLLRLAAIVAASVAAGTMFTSDETLPFFTQFLQFEAGYDDLPTFQFFVIAMSLVSGYIVLSLPISVVTIVRPLAAAPRLLLLVLDTAVMGLTMAAASSAAAISYVAHNGNQNTNWLPICQQFFDFCQKTSGAVVSSFVAVVFFMILVVLSGVALERH.

Residues 1–41 (MKNESTFIDVPADSSSAMKGKAPLIGVAKDHTASGSGGYNR) are Cytoplasmic-facing. A helical transmembrane segment spans residues 42–62 (GLSIFDFLLRLAAIVAASVAA). At 63-92 (GTMFTSDETLPFFTQFLQFEAGYDDLPTFQ) the chain is on the extracellular side. Residues 93–113 (FFVIAMSLVSGYIVLSLPISV) form a helical membrane-spanning segment. Residues 114-125 (VTIVRPLAAAPR) lie on the Cytoplasmic side of the membrane. Residues 126 to 146 (LLLLVLDTAVMGLTMAAASSA) form a helical membrane-spanning segment. At 147-178 (AAISYVAHNGNQNTNWLPICQQFFDFCQKTSG) the chain is on the extracellular side. A helical membrane pass occupies residues 179–199 (AVVSSFVAVVFFMILVVLSGV). Residues 200–204 (ALERH) are Cytoplasmic-facing.

Belongs to the Casparian strip membrane proteins (CASP) family. In terms of assembly, homodimer and heterodimers.

It localises to the cell membrane. Regulates membrane-cell wall junctions and localized cell wall deposition. Required for establishment of the Casparian strip membrane domain (CSD) and the subsequent formation of Casparian strips, a cell wall modification of the root endodermis that determines an apoplastic barrier between the intraorganismal apoplasm and the extraorganismal apoplasm and prevents lateral diffusion. In Raphanus sativus (Radish), this protein is Casparian strip membrane protein 2.